Reading from the N-terminus, the 305-residue chain is Probable G-protein coupled receptor 141 (305 aa).

The Extracellular segment spans residues 1-22; sequence MPGHNTSRNSSCDPIVTPHLIS. Residues Asn-5 and Asn-9 are each glycosylated (N-linked (GlcNAc...) asparagine). Residues 23-43 form a helical membrane-spanning segment; the sequence is LYFIVLIGGLVGVISILFLLV. The Cytoplasmic portion of the chain corresponds to 44-50; that stretch reads KMNTRSV. The helical transmembrane segment at 51-71 threads the bilayer; it reads TTMAVINLVVVHSVFLLTVPF. The Extracellular segment spans residues 72–89; the sequence is RLTYLIKKTWMFGLPFCK. The chain crosses the membrane as a helical span at residues 90–110; that stretch reads FVSAMLHIHMYLTFLFYVVIL. Residues 111–131 are Cytoplasmic-facing; that stretch reads VTRYLIFFKCKDKVEFYRKLH. A helical membrane pass occupies residues 132 to 152; it reads AVAASAGMWTLVIVIVVPLVV. Over 153-183 the chain is Extracellular; that stretch reads SRYGIHEEYNEEHCFKFHKELAYTYVKIINY. Residues 184-204 form a helical membrane-spanning segment; it reads MIVIFVIAVAVILLVFQVFII. Over 205-227 the chain is Cytoplasmic; sequence MLMVQKLRHSLLSHQEFWAQLKN. Residues 228–248 form a helical membrane-spanning segment; sequence LFFIGVILVCFLPYQFFRIYY. Residues 249 to 267 are Extracellular-facing; that stretch reads LNVVTHSNACNSKVAFYNE. The helical transmembrane segment at 268 to 288 threads the bilayer; the sequence is IFLSVTAISCYDLLLFVFGGS. The Cytoplasmic portion of the chain corresponds to 289-305; the sequence is HWFKQKIIGLWNCVLCR.

Belongs to the G-protein coupled receptor 1 family.

It localises to the cell membrane. Its function is as follows. Orphan receptor. This is Probable G-protein coupled receptor 141 (GPR141) from Homo sapiens (Human).